Here is a 420-residue protein sequence, read N- to C-terminus: ATP phosphoribosyltransferase regulatory subunit (420 aa).

It belongs to the class-II aminoacyl-tRNA synthetase family. HisZ subfamily. As to quaternary structure, heteromultimer composed of HisG and HisZ subunits.

The protein resides in the cytoplasm. It functions in the pathway amino-acid biosynthesis; L-histidine biosynthesis; L-histidine from 5-phospho-alpha-D-ribose 1-diphosphate: step 1/9. Its function is as follows. Required for the first step of histidine biosynthesis. May allow the feedback regulation of ATP phosphoribosyltransferase activity by histidine. This is ATP phosphoribosyltransferase regulatory subunit from Bacillus thuringiensis (strain Al Hakam).